The chain runs to 169 residues: Small ribosomal subunit protein uS5 (169 aa).

The region spanning 15 to 79 (LKDQVVAINR…ESAKKNLVKV (65 aa)) is the S5 DRBM domain.

The protein belongs to the universal ribosomal protein uS5 family. In terms of assembly, part of the 30S ribosomal subunit. Contacts proteins S4 and S8.

In terms of biological role, with S4 and S12 plays an important role in translational accuracy. Its function is as follows. Located at the back of the 30S subunit body where it stabilizes the conformation of the head with respect to the body. The polypeptide is Small ribosomal subunit protein uS5 (Koribacter versatilis (strain Ellin345)).